The following is a 411-amino-acid chain: Citrate synthase (411 aa).

Active-site residues include His304 and Asp363.

It belongs to the citrate synthase family.

The enzyme catalyses oxaloacetate + acetyl-CoA + H2O = citrate + CoA + H(+). It participates in carbohydrate metabolism; tricarboxylic acid cycle; isocitrate from oxaloacetate: step 1/2. This is Citrate synthase (gltA) from Rickettsia akari.